Reading from the N-terminus, the 87-residue chain is UPF0175 protein AF_0597 (87 aa).

It belongs to the UPF0175 family.

The sequence is that of UPF0175 protein AF_0597 from Archaeoglobus fulgidus (strain ATCC 49558 / DSM 4304 / JCM 9628 / NBRC 100126 / VC-16).